We begin with the raw amino-acid sequence, 122 residues long: Serum amyloid A-1 protein (122 aa).

An N-terminal signal peptide occupies residues 1-19 (MKLLSGLLLCSLVLGVSSQ). An important for amyloid formation region spans residues 20 to 45 (RWFSFIGEATQGAWDMWRAYSDMREA). Positions 87 to 122 (MGHGAEDSMADQAANEWGRSGKDPNHFRPKGLPDKY) are disordered. Basic and acidic residues predominate over residues 105 to 122 (RSGKDPNHFRPKGLPDKY).

This sequence belongs to the SAA family. As to quaternary structure, homohexamer; dimer of trimers. Can form amyloid fibrils after partial proteolysis; the native, undenatured protein does not form amyloid fibrils (in vitro). Apolipoprotein of the HDL complex. Binds to heparin. In terms of tissue distribution, detected in liver.

It is found in the secreted. Functionally, major acute phase protein. In Oryctolagus cuniculus (Rabbit), this protein is Serum amyloid A-1 protein (SAA1).